The sequence spans 309 residues: Homoserine kinase (309 aa).

91-101 contributes to the ATP binding site; sequence PIGSGLGSSAC.

This sequence belongs to the GHMP kinase family. Homoserine kinase subfamily.

It localises to the cytoplasm. The catalysed reaction is L-homoserine + ATP = O-phospho-L-homoserine + ADP + H(+). It participates in amino-acid biosynthesis; L-threonine biosynthesis; L-threonine from L-aspartate: step 4/5. In terms of biological role, catalyzes the ATP-dependent phosphorylation of L-homoserine to L-homoserine phosphate. This Salmonella agona (strain SL483) protein is Homoserine kinase.